The sequence spans 172 residues: MSINFKDYVASVPDFPEAGVTFRDISPLMSDGEAYAAATDKIVEYAKNKGVEMIVGPEARGFIVGCPVAYKLGVGFAPARKKGKLPRETVSASYGLEYGKSTLYMHKDAVKPGQKVLVTDDLLATGGTIAATIKMVEELGGIVVGTAFFIELKDLNGREKIKDYDIFKLMEY.

The protein belongs to the purine/pyrimidine phosphoribosyltransferase family. As to quaternary structure, homodimer.

It localises to the cytoplasm. It catalyses the reaction AMP + diphosphate = 5-phospho-alpha-D-ribose 1-diphosphate + adenine. The protein operates within purine metabolism; AMP biosynthesis via salvage pathway; AMP from adenine: step 1/1. Its function is as follows. Catalyzes a salvage reaction resulting in the formation of AMP, that is energically less costly than de novo synthesis. In Latilactobacillus sakei subsp. sakei (strain 23K) (Lactobacillus sakei subsp. sakei), this protein is Adenine phosphoribosyltransferase.